Consider the following 211-residue polypeptide: Transcription antitermination protein NusB (211 aa).

The protein belongs to the NusB family.

Its function is as follows. Involved in transcription antitermination. Required for transcription of ribosomal RNA (rRNA) genes. Binds specifically to the boxA antiterminator sequence of the ribosomal RNA (rrn) operons. This Gloeobacter violaceus (strain ATCC 29082 / PCC 7421) protein is Transcription antitermination protein NusB.